The following is a 294-amino-acid chain: MHPRFQTAFAQLADNLQSALAPILADHHFPAMLTAEQVSTLKNTAGLDEDALAFALLPLAAACARTDLSHFNVGAIARGVSGNWYFGANMEFLGATMQQTVHAEQSAISHAWLRGEKGLAAVTVNYTPCGHCRQFMNELNSGLDLRIHLPGRAPHTLRDYLPDAFGPKDLEIKTLLMDEQDHGFTLTGNTLTQAAITAANKSHMPYSHSPSGVALECKDGRIFTGSYAENAAFNPTLPPLQGALNLLSLNGYDYADIQRAILAEKGDAALIQWDATAATLKALGCHNIDRVLLG.

CMP/dCMP-type deaminase domains are found at residues 48–168 (DEDA…FGPK) and 186–294 (LTGN…VLLG). A substrate-binding site is contributed by 89 to 91 (NME). H102 contributes to the Zn(2+) binding site. E104 acts as the Proton donor in catalysis. Positions 129 and 132 each coordinate Zn(2+).

Belongs to the cytidine and deoxycytidylate deaminase family. In terms of assembly, homodimer. Zn(2+) is required as a cofactor.

The enzyme catalyses cytidine + H2O + H(+) = uridine + NH4(+). It carries out the reaction 2'-deoxycytidine + H2O + H(+) = 2'-deoxyuridine + NH4(+). Its function is as follows. This enzyme scavenges exogenous and endogenous cytidine and 2'-deoxycytidine for UMP synthesis. This Salmonella typhi protein is Cytidine deaminase.